The primary structure comprises 337 residues: Metacaspase III c (337 aa).

Propeptides lie at residues 1-6 and 116-125; these read MGFLRR and VPPAATGTRR. C202 carries the post-translational modification Cysteine sulfenic acid (-SOH). An intrachain disulfide couples C202 to C259. H207 is a catalytic residue. Residues D224, D240, and D241 each contribute to the Ca(2+) site. Residue C264 is part of the active site. D271 serves as a coordination point for Ca(2+). Residues 290 to 337 constitute a propeptide that is removed on maturation; that stretch reads NFDFKKLLGKFGIDDFDKFGGEALGKINGDALGKVGKDALGKLNKFFG.

The protein belongs to the peptidase C14B family. Post-translationally, auto-proteolytic cleavage into a large and a small subunit which probably remain associated by non-covalent bonds. Following oxidative stress, the oxidation of Cys-202 leads to the formation of a disulfide bond between Cys-202 and Cys-259 which enhances catalytic activity.

Its activity is regulated as follows. Activated by Ca(2+). Its function is as follows. Cysteine protease that cleaves specifically after arginine residues. The polypeptide is Metacaspase III c (Phaeodactylum tricornutum (strain CCAP 1055/1)).